The following is a 1035-amino-acid chain: Cell-division control histidine kinase PdhS (1035 aa).

The segment at 1–613 (MSGSYPFIDI…HADGSEEPVD (613 aa)) is important for polar localization. A disordered region spans residues 500–533 (QGLANTRAESETPVSETSSIEPVEPTPPVKTRSE). Positions 614 to 1035 (AHLNAIAWRG…VFPPTRVLAD (422 aa)) are interaction with DivK. Residues 659-730 (HVEELKTILD…YLHGLSGNGV (72 aa)) enclose the PAS domain. The Histidine kinase domain occupies 802–1031 (RISHEIRTPL…VVEIVFPPTR (230 aa)). The residue at position 805 (H805) is a Phosphohistidine; by autocatalysis.

Interacts with DivK.

The protein resides in the cytoplasm. The catalysed reaction is ATP + protein L-histidine = ADP + protein N-phospho-L-histidine.. In terms of biological role, functions as a polar differentiation marker. Essential protein that, by localizing in the old pole of dividing cells, controls cell division and maturation, probably through control of DivK phosphorylation status and cellular distribution, which in turn regulates CtrA, a transcriptional regulator of the minB operon. The asymmetrical localization of this protein is probably required for cells to enter a new division cycle. The sequence is that of Cell-division control histidine kinase PdhS (pdhS) from Brucella abortus (strain S19).